Reading from the N-terminus, the 69-residue chain is uncharacterized protein (69 aa).

This is an uncharacterized protein from Homo sapiens (Human).